An 838-amino-acid chain; its full sequence is MHLIPKELDKLVISQLGFLAQRRLARGVRLNHAEAAALISSNLQELIRDGHYSVADLMSIGKTMLGRRHVLPSVVHTLVELQVEGTFPTGTYLVTVHHPISSDDGDLEKALYGSFLPIPPADTFPDPNPDDYLPEKMPGAVLPVKNERITLNDGRKRIRLKVMSKGDRPIQVGSHYHFIETNPQLHFDRLRAYGYRLDIPAGTSVRFEPGDTKTVTLVEIAGNRIIKGGNSIASGKVDISRAEEILQRLQVEGFAHVPEPAPTADSALIAPFTMDREAYARMFGPTTGDLVRLGLTNLWVRVEKDCTVYGDECAFGGGKTLREGMGQSSERSATECLDTVITNALIIDWSGIYKADIGIKNGLISAIGKAGNPDMMDGVHPDMIVGSSTDVIAGENKIVTAGGFDTHIHFICPQQVDEALASGITTFLGGGTGPSTGTNATTCTPGPTLMRQMIQACDGLPINVGITGKGNDSGGKSIEEQIRAGAAGLKLHEDWGSTPAAIDTCLDMCDKFDVQCMIHTDTLNESGFVEQTVKSFKNRTIHTYHTEGAGGGHAPDIISVVEHPNVLPSSTNPTRPFTMNTLDEHLDMLMVCHHLSKNIPEDVAFAESRIRAETIAAEDVLHDLGAISMMSSDSQAMGRCGEVILRTWNTAHKNKAQRGPLKEDEGTGADNFRVKRYISKYTINPAIAQGMSHLIGSVEVGKLADLVIWHPSTFGTKPAQVLKSGMIVASQMGDPNGSIPTIEPVVMRRQFGAFVPSTSIMWVSQASIDDGIVQSYGLKKRIEAVRNCRNIGKKDMKFNDVMPKMRVDPESYVVEADGVLCDAEPAEALPLTQDYFVY.

The 437-residue stretch at 402–838 folds into the Urease domain; it reads GGFDTHIHFI…LPLTQDYFVY (437 aa). Ni(2+)-binding residues include His-407, His-409, and Lys-490. Lys-490 bears the N6-carboxylysine mark. His-492 lines the substrate pocket. Residues His-519 and His-545 each coordinate Ni(2+). His-593 (proton donor) is an active-site residue. Asp-633 lines the Ni(2+) pocket.

This sequence in the C-terminal section; belongs to the metallo-dependent hydrolases superfamily. Urease alpha subunit family. As to quaternary structure, homohexamer. The cofactor is Ni cation. Post-translationally, carboxylation allows a single lysine to coordinate two nickel ions.

It carries out the reaction urea + 2 H2O + H(+) = hydrogencarbonate + 2 NH4(+). The protein operates within nitrogen metabolism; urea degradation; CO(2) and NH(3) from urea (urease route): step 1/1. The chain is Urease (ure1) from Aspergillus fumigatus (strain ATCC MYA-4609 / CBS 101355 / FGSC A1100 / Af293) (Neosartorya fumigata).